The primary structure comprises 589 residues: Serine/threonine-protein phosphatase 2A 65 kDa regulatory subunit A alpha isoform (589 aa).

N-acetylalanine is present on A2. HEAT repeat units follow at residues 8–46 (DSLYPIAVLIDELRNEDVQLRLNSIKKLSTIALALGVER), 47–84 (TRSELLPFLTDTIYDEDEVLLALAEQLGTFTTLVGGPE), 85–123 (YVHCLLPPLESLATVEETVVRDKAVESLRAISHEHSPSD), 124–161 (LEAHFVPLVKRLAGGDWFTSRTSACGLFSVCYPRVSSA), 162–200 (VKAELRQYFRNLCSDDTPMVRRAAASKLGEFAKVLELDN), 201–239 (VKSEIIPMFSNLASDEQDSVRLLAVEACVNIAQLLPQED), 240–278 (LEALVMPTLRQAAEDKSWRVRYMVADKFTELHKAVGPEI), 279–321 (TKTD…RENV), 322–360 (IMTQILPCIKELVSDANQHVKSALASVIMGLSPILGKDS), 361–399 (TIEHLLPLFLAQLKDECPEVRLNIISNLDCVNEVIGIRQ), 400–438 (LSQSLLPAIVELAEDAKWRVRLAIIEYMPLLAGQLGVEF), 439–477 (FDEKLNSLCMAWLVDHVYAIREAATSNLKKLVEKFGKEW), 478–516 (AHATIIPKVLAMSGDPNYLHRMTTLFCINVLSEVCGQDI), 517–555 (TTKHMLPTVLRMAGDPVANVRFNVAKSLQKIGPILDNST), and 556–589 (LQSEVKPVLEKLTQDQDVDVKYFAQEALTVLSLA). The tract at residues 8-399 (DSLYPIAVLI…CVNEVIGIRQ (392 aa)) is PP2A subunit B binding. The segment at 47 to 321 (TRSELLPFLT…NLSADCRENV (275 aa)) is polyoma small and medium T antigens Binding. Residues 85-239 (YVHCLLPPLE…NIAQLLPQED (155 aa)) are SV40 small T antigen binding. K280 bears the N6-acetyllysine mark. The segment at 400–589 (LSQSLLPAIV…QEALTVLSLA (190 aa)) is PP2A subunit C binding.

It belongs to the phosphatase 2A regulatory subunit A family. As to quaternary structure, PP2A consists of a common heterodimeric core enzyme, composed of PPP2CA a 36 kDa catalytic subunit (subunit C) and PPP2R1A a 65 kDa constant regulatory subunit (PR65 or subunit A), that associates with a variety of regulatory subunits. Proteins that associate with the core dimer include three families of regulatory subunits B (the R2/B/PR55/B55, R3/B''/PR72/PR130/PR59 and R5/B'/B56 families), the 48 kDa variable regulatory subunit, viral proteins, and cell signaling molecules. Found in a complex with at least ARL2, PPP2CB, PPP2R1A, PPP2R2A, PPP2R5E and TBCD. Interacts with the PP2A C catalytic subunit PPP2CA. Interacts with the PP2A B subunit PPP2R2A. Interacts with the PP2A B subunit PPP2R5D. Interacts with FOXO1; the interaction dephosphorylates FOXO1 on AKT-mediated phosphorylation sites. Interacts with IPO9. Interacts with TP53 and SGO1. Interacts with PLA2G16; this interaction might decrease PP2A activity. Interacts with CTTNBP2NL. Interacts with GNA12; the interaction promotes protein phosphatase 2A activation causing dephosphorylation of MAPT. Interacts with CIP2A; this interaction stabilizes CIP2A. Interacts with PABIR1/FAM122A. Interacts with ADCY8; antagonizes interaction between ADCY8 and calmodulin. Interacts with CRTC3 (when phosphorylated at 'Ser-391'). Interacts with SPRY2. Part of the core of STRIPAK complexes composed of PP2A catalytic and scaffolding subunits, the striatins (PP2A regulatory subunits), the striatin-associated proteins MOB4, STRIP1 and STRIP2, PDCD10 and members of the STE20 kinases, such as STK24 and STK26. Component of the Integrator-PP2A (INTAC) complex, composed of the Integrator core complex and protein phosphatase 2A subunits PPP2CA and PPP2R1A.

Its subcellular location is the cytoplasm. It localises to the nucleus. The protein localises to the chromosome. The protein resides in the centromere. It is found in the lateral cell membrane. Its subcellular location is the cell projection. It localises to the dendrite. Functionally, the PR65 subunit of protein phosphatase 2A serves as a scaffolding molecule to coordinate the assembly of the catalytic subunit and a variable regulatory B subunit. Upon interaction with GNA12 promotes dephosphorylation of microtubule associated protein TAU/MAPT. Required for proper chromosome segregation and for centromeric localization of SGO1 in mitosis. Together with RACK1 adapter, mediates dephosphorylation of AKT1 at 'Ser-473', preventing AKT1 activation and AKT-mTOR signaling pathway. Dephosphorylation of AKT1 is essential for regulatory T-cells (Treg) homeostasis and stability. Part of the striatin-interacting phosphatase and kinase (STRIPAK) complexes. STRIPAK complexes have critical roles in protein (de)phosphorylation and are regulators of multiple signaling pathways including Hippo, MAPK, nuclear receptor and cytoskeleton remodeling. Different types of STRIPAK complexes are involved in a variety of biological processes such as cell growth, differentiation, apoptosis, metabolism and immune regulation. Key mediator of a quality checkpoint during transcription elongation as part of the Integrator-PP2A (INTAC) complex. The INTAC complex drives premature transcription termination of transcripts that are unfavorably configured for transcriptional elongation: within the INTAC complex, acts as a scaffolding subunit for PPP2CA, which catalyzes dephosphorylation of the C-terminal domain (CTD) of Pol II subunit POLR2A/RPB1 and SUPT5H/SPT5, thereby preventing transcriptional elongation. Regulates the recruitment of the SKA complex to kinetochores. This is Serine/threonine-protein phosphatase 2A 65 kDa regulatory subunit A alpha isoform (PPP2R1A) from Bos taurus (Bovine).